A 478-amino-acid polypeptide reads, in one-letter code: TFIIA-alpha and beta-like factor (478 aa).

The tract at residues 309 to 427 is disordered; it reads VKQPRNIEEP…SGDDVSEQDV (119 aa). A compositionally biased stretch (polar residues) spans 390–401; that stretch reads SISNEDSATNSS. The segment covering 411 to 427 has biased composition (acidic residues); sequence VEEDPLNSGDDVSEQDV.

This sequence belongs to the TFIIA subunit 1 family. As to expression, testis specific. Detected in adult testis mostly in round and elongating spermatids (at protein level). Detected in testis.

It localises to the nucleus. May function as a testis specific transcription factor. Binds DNA in conjunction with GTF2A2 and TBP (the TATA-binding protein) and together with GTF2A2, allows mRNA transcription. In Homo sapiens (Human), this protein is TFIIA-alpha and beta-like factor (GTF2A1L).